The primary structure comprises 419 residues: NF-kappa-B essential modulator (419 aa).

The tract at residues 1–197 (MNRHLWKSQL…REALQQQHSV (197 aa)) is required for interaction with and ubiquitination by MARCHF2. 2 positions are modified to phosphoserine; by IKKB: Ser31 and Ser43. Residues 44–111 (EQGAPETLQR…KLVERLGLEK (68 aa)) form an interaction with CHUK/IKBKB region. Residues 49–356 (ETLQRCLEEN…CQESARIEDM (308 aa)) adopt a coiled-coil conformation. Ser68 is subject to Phosphoserine. Ser85 carries the phosphoserine; by ATM modification. Residues Lys111, Lys139, Lys143, Lys226, Lys246, and Lys264 each participate in a glycyl lysine isopeptide (Lys-Gly) (interchain with G-Cter in ubiquitin) cross-link. The interaction with TANK stretch occupies residues 150–257 (LGELQESQSR…SVVGSERKRG (108 aa)). Positions 242–350 (DNHIKSSVVG…SKLKASCQES (109 aa)) are ubiquitin-binding (UBAN). The interval 246-365 (KSSVVGSERK…MRKRHVEVSQ (120 aa)) is self-association. Residues 251 to 419 (GSERKRGMQL…LQIHVMECIE (169 aa)) form a required for interaction with TNFAIP3 region. Residue Lys277 forms a Glycyl lysine isopeptide (Lys-Gly) (interchain with G-Cter in SUMO); alternate linkage. A Glycyl lysine isopeptide (Lys-Gly) (interchain with G-Cter in ubiquitin); alternate cross-link involves residue Lys277. Residues Lys283, Lys285, Lys292, and Lys302 each participate in a glycyl lysine isopeptide (Lys-Gly) (interchain with G-Cter in ubiquitin) cross-link. A Glycyl lysine isopeptide (Lys-Gly) (interchain with G-Cter in SUMO); alternate cross-link involves residue Lys309. Residue Lys309 forms a Glycyl lysine isopeptide (Lys-Gly) (interchain with G-Cter in ubiquitin); alternate linkage. Residues Lys321 and Lys325 each participate in a glycyl lysine isopeptide (Lys-Gly) (interchain with G-Cter in ubiquitin) cross-link. Residues 322 to 343 (LAEKKELLQEQLEQLQREYSKL) are leucine-zipper. Lys326 is covalently cross-linked (Glycyl lysine isopeptide (Lys-Gly) (interchain with G-Cter in ubiquitin and interchain with MARCHF2)). Residues 358–395 (KRHVEVSQAPLPPAPAYLSSPLALPSQRRSPPEEPPDF) form a disordered region. A compositionally biased stretch (low complexity) spans 373–386 (AYLSSPLALPSQRR). Residue Ser376 is modified to Phosphoserine; by IKKB. Residues 382-419 (PSQRRSPPEEPPDFCCPKCQYQAPDMDTLQIHVMECIE) are interaction with CYLD. The residue at position 387 (Ser387) is a Phosphoserine. Residues 389 to 419 (PEEPPDFCCPKCQYQAPDMDTLQIHVMECIE) form a CCHC NOA-type zinc finger. Zn(2+) is bound at residue Cys397. A Glycyl lysine isopeptide (Lys-Gly) (interchain with G-Cter in ubiquitin) cross-link involves residue Lys399. Positions 400, 413, and 417 each coordinate Zn(2+).

In terms of assembly, homodimer; disulfide-linked. Component of the I-kappa-B-kinase (IKK) core complex consisting of CHUK, IKBKB and IKBKG; probably four alpha/CHUK-beta/IKBKB dimers are associated with four gamma/IKBKG subunits. The IKK core complex seems to associate with regulatory or adapter proteins to form a IKK-signalosome holo-complex. The IKK complex associates with TERF2IP/RAP1, leading to promote IKK-mediated phosphorylation of RELA/p65. Part of a complex composed of NCOA2, NCOA3, CHUK/IKKA, IKBKB, IKBKG and CREBBP. Interacts with COPS3, CYLD, NALP2, TRPC4AP and PIDD1. Interacts with ATM; the complex is exported from the nucleus. Interacts with TRAF6. Interacts with IKBKE. Interacts with TANK; the interaction is enhanced by IKBKE and TBK1. Part of a ternary complex consisting of TANK, IKBKB and IKBKG. Interacts with ZFAND5. Interacts with RIPK2. Interacts with TNIP1 and TNFAIP3; TNIP1 facilitates the TNFAIP3-mediated de-ubiquitination of IKBKG. Interacts with TNFAIP3; the interaction is induced by TNF stimulation and by polyubiquitin. Binds (via UBAN region) polyubiquitin; binds both 'Lys-63'-linked and linear polyubiquitin, with higher affinity for linear ubiquitin. Interacts with NLRP10. Interacts with TANK; this interaction increases in response to DNA damage. Interacts with USP10; this interaction increases in response to DNA damage. Interacts with ZC3H12A; this interaction increases in response to DNA damage. Interacts with IFIT5; the interaction synergizes the recruitment of IKK to MAP3K7 and enhances IKK phosphorylation. Interacts with TRIM29; this interaction induces IKBKG/NEMO ubiquitination and proteolytic degradation. Interacts with TRIM13; this interaction leads to IKBKG/NEMO ubiquitination. Interacts with ARFIP2. Interacts with RIPK1. Interacts with (ubiquitinated) BCL10; interaction with polyubiquitinated BCL10 via both 'Lys-63'-linked and linear ubiquitin is required for TCR-induced NF-kappa-B activation. Interacts with MARCHF2; during the late stages of macrophage viral and bacterial infection; the interaction leads to ubiquitination and degradation of IKBKG/NEMO. (Microbial infection) Interacts with Molluscum contagiosum virus protein MC005; this interaction inhibits NF-kappa-B activation. As to quaternary structure, (Microbial infection) Interacts with HTLV-1 Tax oncoprotein; the interaction activates IKBKG. In terms of assembly, (Microbial infection) Interacts with Shigella flexneri ipah9.8; the interaction promotes TNIP1-dependent 'Lys-27'-linked polyubiquitination of IKBKG which perturbs NF-kappa-B activation during bacterial infection. (Microbial infection) Interacts with SARS coronavirus-2/SARS-CoV-2 virus protein ORF9B (via N-terminus); the interaction inhibits polyubiquitination through 'Lys-63' and NF-kappa-B activation. In terms of processing, phosphorylation at Ser-68 attenuates aminoterminal homodimerization. Post-translationally, polyubiquitinated on Lys-285 via 'Lys-63'-linked ubiquitin; the ubiquitination is mediated downstream of NOD2 and RIPK2 and probably plays a role in signaling by facilitating interactions with ubiquitin domain-containing proteins and activates the NF-kappa-B pathway. Polyubiquitinated on Lys-285 and Lys-399 through 'Lys-63'-linked ubiquitin; the ubiquitination is mediated by BCL10, MALT1 and TRAF6 and probably plays a role in signaling by facilitating interactions with ubiquitin domain-containing proteins and activates the NF-kappa-B pathway. Monoubiquitinated on Lys-277 and Lys-309; promotes nuclear export. Polyubiquitinated through 'Lys-27' by TRIM23; involved in antiviral innate and inflammatory responses. Linear polyubiquitinated on Lys-111, Lys-143, Lys-226, Lys-246, Lys-264, Lys-277, Lys-285, Lys-292, Lys-302, Lys-309 and Lys-326; the head-to-tail polyubiquitination is mediated by the LUBAC complex and plays a key role in NF-kappa-B activation. Deubiquitinated by USP10 in a TANK-dependent and -independent manner, leading to the negative regulation of NF-kappa-B signaling upon DNA damage. Ubiquitinated at Lys-326 by MARCHF2 following bacterial and viral infection which leads to its degradation. Polyubiquitinated via 'Lys-29'-linked ubiquitin; leading to lysosomal degradation. Sumoylated on Lys-277 and Lys-309 with SUMO1; the modification results in phosphorylation of Ser-85 by ATM leading to a replacement of the sumoylation by mono-ubiquitination on these residues. In terms of processing, neddylated by TRIM40, resulting in stabilization of NFKBIA and down-regulation of NF-kappa-B activity. Post-translationally, (Microbial infection) Cleaved by hepatitis A virus (HAV) protease 3C allowing the virus to disrupt the host innate immune signaling. (Microbial infection) Deubiquitinated by Epstein-Barr virus BPLF1 on both 'Lys-48' and 'Lys-63'-linked ubiquitin chains; leading to NF-kappa-B signaling inhibition. In terms of processing, (Microbial infection) Polyubiquitinated on Lys-309 and Lys-321 via 'Lys-27'-linked ubiquitin by Shigella flexneri E3 ubiquitin-protein ligase ipah9.8, leading to its degradation by the proteasome. Post-translationally, (Microbial infection) Polyubiquitination through 'Lys-63' is interrupted by interaction with SARS coronavirus-2/SARS-CoV-2 virus protein ORF9B which inhibits the NF-kappa-B pathway. Heart, brain, placenta, lung, liver, skeletal muscle, kidney and pancreas.

It localises to the cytoplasm. Its subcellular location is the nucleus. Functionally, regulatory subunit of the IKK core complex which phosphorylates inhibitors of NF-kappa-B thus leading to the dissociation of the inhibitor/NF-kappa-B complex and ultimately the degradation of the inhibitor. Its binding to scaffolding polyubiquitin plays a key role in IKK activation by multiple signaling receptor pathways. Can recognize and bind both 'Lys-63'-linked and linear polyubiquitin upon cell stimulation, with a much higher affinity for linear polyubiquitin. Could be implicated in NF-kappa-B-mediated protection from cytokine toxicity. Essential for viral activation of IRF3. Involved in TLR3- and IFIH1-mediated antiviral innate response; this function requires 'Lys-27'-linked polyubiquitination. In terms of biological role, (Microbial infection) Also considered to be a mediator for HTLV-1 Tax oncoprotein activation of NF-kappa-B. This Homo sapiens (Human) protein is NF-kappa-B essential modulator.